A 418-amino-acid polypeptide reads, in one-letter code: Protein fuzzy homolog (418 aa).

The protein belongs to the fuzzy family. In terms of assembly, component of the CPLANE (ciliogenesis and planar polarity effectors) complex, composed of INTU, FUZ and WDPCP. Interacts with CPLANE2. Interacts with CPLANE1.

It is found in the cytoplasm. Its subcellular location is the cytoskeleton. The protein localises to the cilium basal body. In terms of biological role, probable planar cell polarity effector involved in cilium biogenesis. May regulate protein and membrane transport to the cilium. Proposed to function as core component of the CPLANE (ciliogenesis and planar polarity effectors) complex involved in the recruitment of peripheral IFT-A proteins to basal bodies. May regulate the morphogenesis of hair follicles which depends on functional primary cilia. Binds phosphatidylinositol 3-phosphate with highest affinity, followed by phosphatidylinositol 4-phosphate and phosphatidylinositol 5-phosphate. The polypeptide is Protein fuzzy homolog (FUZ) (Homo sapiens (Human)).